The chain runs to 85 residues: Kappa-theraphotoxin-Cg1d (85 aa).

The first 21 residues, 1–21 (MKVSVLITLAVLGVMFVWASA), serve as a signal peptide directing secretion. The propeptide occupies 22-51 (AELEERGSDQRDSPAWLKSMERIFQSEERE). 3 disulfide bridges follow: Cys-52-Cys-66, Cys-59-Cys-71, and Cys-65-Cys-78.

This sequence belongs to the neurotoxin 10 (Hwtx-1) family. 28 (Jztx-11) subfamily. As to expression, expressed by the venom gland.

It is found in the secreted. Functionally, probable ion channel inhibitor. This Chilobrachys guangxiensis (Chinese earth tiger tarantula) protein is Kappa-theraphotoxin-Cg1d.